The following is a 119-amino-acid chain: Integration host factor subunit beta (119 aa).

Residues 91–119 (DLVGNDQGDDSSNGSSDPLQSVMDMHAMH) are disordered. Over residues 94-107 (GNDQGDDSSNGSSD) the composition is skewed to low complexity.

This sequence belongs to the bacterial histone-like protein family. As to quaternary structure, heterodimer of an alpha and a beta chain.

In terms of biological role, this protein is one of the two subunits of integration host factor, a specific DNA-binding protein that functions in genetic recombination as well as in transcriptional and translational control. This chain is Integration host factor subunit beta, found in Bordetella parapertussis (strain 12822 / ATCC BAA-587 / NCTC 13253).